The following is a 385-amino-acid chain: DNA replication and repair protein RecF (385 aa).

30 to 37 (GPNGYGKT) is a binding site for ATP.

Belongs to the RecF family.

It is found in the cytoplasm. Functionally, the RecF protein is involved in DNA metabolism; it is required for DNA replication and normal SOS inducibility. RecF binds preferentially to single-stranded, linear DNA. It also seems to bind ATP. This chain is DNA replication and repair protein RecF, found in Mycobacterium tuberculosis (strain ATCC 25177 / H37Ra).